The primary structure comprises 212 residues: Thymidylate kinase (212 aa).

13 to 20 provides a ligand contact to ATP; sequence GLEGAGKS.

This sequence belongs to the thymidylate kinase family.

It carries out the reaction dTMP + ATP = dTDP + ADP. In terms of biological role, phosphorylation of dTMP to form dTDP in both de novo and salvage pathways of dTTP synthesis. This chain is Thymidylate kinase, found in Legionella pneumophila (strain Paris).